The following is a 961-amino-acid chain: Leucine--tRNA ligase (961 aa).

The short motif at 41–51 (PYLNGNLHAGH) is the 'HIGH' region element. Positions 632-636 (KMSKS) match the 'KMSKS' region motif. An ATP-binding site is contributed by Lys635.

The protein belongs to the class-I aminoacyl-tRNA synthetase family.

It is found in the cytoplasm. It carries out the reaction tRNA(Leu) + L-leucine + ATP = L-leucyl-tRNA(Leu) + AMP + diphosphate. In Methanosarcina acetivorans (strain ATCC 35395 / DSM 2834 / JCM 12185 / C2A), this protein is Leucine--tRNA ligase.